We begin with the raw amino-acid sequence, 151 residues long: Large ribosomal subunit protein bL9 (151 aa).

It belongs to the bacterial ribosomal protein bL9 family.

Binds to the 23S rRNA. This Carboxydothermus hydrogenoformans (strain ATCC BAA-161 / DSM 6008 / Z-2901) protein is Large ribosomal subunit protein bL9.